Consider the following 333-residue polypeptide: Anthranilate phosphoribosyltransferase (333 aa).

Residues glycine 80, 83-84 (GD), threonine 88, 90-93 (NLST), 108-116 (KHGNRSASG), and serine 120 each bind 5-phospho-alpha-D-ribose 1-diphosphate. Glycine 80 contacts anthranilate. Residue serine 92 coordinates Mg(2+). An anthranilate-binding site is contributed by asparagine 111. Residue arginine 166 coordinates anthranilate. 2 residues coordinate Mg(2+): aspartate 224 and glutamate 225.

It belongs to the anthranilate phosphoribosyltransferase family. In terms of assembly, homodimer. The cofactor is Mg(2+).

It catalyses the reaction N-(5-phospho-beta-D-ribosyl)anthranilate + diphosphate = 5-phospho-alpha-D-ribose 1-diphosphate + anthranilate. Its pathway is amino-acid biosynthesis; L-tryptophan biosynthesis; L-tryptophan from chorismate: step 2/5. Catalyzes the transfer of the phosphoribosyl group of 5-phosphorylribose-1-pyrophosphate (PRPP) to anthranilate to yield N-(5'-phosphoribosyl)-anthranilate (PRA). This chain is Anthranilate phosphoribosyltransferase, found in Pyrobaculum aerophilum (strain ATCC 51768 / DSM 7523 / JCM 9630 / CIP 104966 / NBRC 100827 / IM2).